The sequence spans 174 residues: Type II secretion system protein M (174 aa).

The Cytoplasmic segment spans residues 1–32 (MKVMTQFHERLRAQAETSQLAIRWRGLPARDR). A helical membrane pass occupies residues 33–52 (LALLWLGAFLLLVVLYLALW). Topologically, residues 53-174 (RPAERHLQSA…VSARLSLRVE (122 aa)) are periplasmic.

The protein belongs to the GSP M family. Type II secretion system is composed of four main components: the outer membrane complex, the inner membrane complex, the cytoplasmic secretion ATPase and the periplasm-spanning pseudopilus. Forms homodimers. Interacts with XcpY/GspL. Interacts with XcpR/GspE and XcpS/GspF.

The protein resides in the cell inner membrane. In terms of biological role, inner membrane component of the type II secretion system required for the energy-dependent secretion of extracellular factors such as proteases and toxins from the periplasm. Plays a role in the complex assembly and recruits XcpY resulting in a stable complex in the inner membrane. Provides thus a link between the energy-providing XcpR protein in the cytoplasm and the rest of the T2SS machinery. The sequence is that of Type II secretion system protein M (xcpZ) from Pseudomonas aeruginosa (strain ATCC 15692 / DSM 22644 / CIP 104116 / JCM 14847 / LMG 12228 / 1C / PRS 101 / PAO1).